The following is a 161-amino-acid chain: Cyclic pyranopterin monophosphate synthase (161 aa).

Residues 75-77 (LCH) and 113-114 (ME) contribute to the substrate site. Asp-128 is an active-site residue.

This sequence belongs to the MoaC family. As to quaternary structure, homohexamer; trimer of dimers.

It catalyses the reaction (8S)-3',8-cyclo-7,8-dihydroguanosine 5'-triphosphate = cyclic pyranopterin phosphate + diphosphate. Its pathway is cofactor biosynthesis; molybdopterin biosynthesis. Its function is as follows. Catalyzes the conversion of (8S)-3',8-cyclo-7,8-dihydroguanosine 5'-triphosphate to cyclic pyranopterin monophosphate (cPMP). The sequence is that of Cyclic pyranopterin monophosphate synthase from Erwinia tasmaniensis (strain DSM 17950 / CFBP 7177 / CIP 109463 / NCPPB 4357 / Et1/99).